We begin with the raw amino-acid sequence, 155 residues long: NADH-ubiquinone oxidoreductase chain 6 (155 aa).

Helical transmembrane passes span 10-30 (ILAI…VLFV), 43-63 (LMGI…FLFI), 75-95 (GTIH…LDLS), and 133-153 (AIPM…AIAI).

This sequence belongs to the complex I subunit 6 family.

Its subcellular location is the mitochondrion membrane. The enzyme catalyses a ubiquinone + NADH + 5 H(+)(in) = a ubiquinol + NAD(+) + 4 H(+)(out). Its function is as follows. Core subunit of the mitochondrial membrane respiratory chain NADH dehydrogenase (Complex I) that is believed to belong to the minimal assembly required for catalysis. Complex I functions in the transfer of electrons from NADH to the respiratory chain. The immediate electron acceptor for the enzyme is believed to be ubiquinone. This Candida parapsilosis (Yeast) protein is NADH-ubiquinone oxidoreductase chain 6 (ND6).